The following is a 336-amino-acid chain: MKDRYILAFETSCDETSVAVLKNDDELLSNVIASQIESHKRFGGVVPEVASRHHVEVITACIEEALAEAGITEEDVTAVAVTYGPGLVGALLVGLSAAKTFAWAHGLPLIPVNHMAGHLMAAQSVEPLEFPLLALLVSGGHTELVYVSEAGDYKIVGETRDDAVGEAYDKVGRVMGLTYPAGREIDELAHQGQDIYDFPRAMIKEDNLEFSFSGLKSAFINLYHNAEQKGESLSTEDLCASFQAAVMDILMAKTKKALEKYPVKTLVVAGGVAANKGLRERLAAEITDVKVIIPPLRLCGDNAGMIAYASVSEWNKENFAGWDLNAKPSLAFDTME.

2 residues coordinate Fe cation: H114 and H118. Substrate contacts are provided by residues L136–G140, D169, G182, D186, and N275. Position 301 (D301) interacts with Fe cation.

Belongs to the KAE1 / TsaD family. It depends on Fe(2+) as a cofactor.

The protein localises to the cytoplasm. It carries out the reaction L-threonylcarbamoyladenylate + adenosine(37) in tRNA = N(6)-L-threonylcarbamoyladenosine(37) in tRNA + AMP + H(+). In terms of biological role, required for the formation of a threonylcarbamoyl group on adenosine at position 37 (t(6)A37) in tRNAs that read codons beginning with adenine. Is involved in the transfer of the threonylcarbamoyl moiety of threonylcarbamoyl-AMP (TC-AMP) to the N6 group of A37, together with TsaE and TsaB. TsaD likely plays a direct catalytic role in this reaction. The sequence is that of tRNA N6-adenosine threonylcarbamoyltransferase from Streptococcus pneumoniae (strain Taiwan19F-14).